The following is a 590-amino-acid chain: Zinc finger protein 285 (590 aa).

The KRAB domain occupies 8–86; that stretch reads VTFKDVAVVF…WKQRIRDLTV (79 aa). The C2H2-type 1 zinc-finger motif lies at 232–254; that stretch reads FPCNNCGVAFADDTDPHVHHSTH. The C2H2-type 2; degenerate zinc-finger motif lies at 260 to 282; that stretch reads YKCDQYGKNFSQSQDLIVHCKTH. 9 consecutive C2H2-type zinc fingers follow at residues 316–338, 344–366, 372–394, 400–422, 428–450, 456–478, 484–506, 512–534, and 540–562; these read YKCKECGKGFRRSSSLHNHHRVH, YKCDECGKGFGFRSLLCIHQGVH, YKCEECGKGFDQSSNLLVHQRVH, YKCSECGKCFSSSSVLQVHWRFH, YRCGECGKGFSQCTHLHIHQRVH, YKCNVCGKDFAYSSVLHTHQRVH, YKCEVCGKCFSYSSYFHLHQRDH, YKCDECGKGFSRNSDLNVHLRVH, and YKCKACGKGFSRNSYLLAHQRVH.

It belongs to the krueppel C2H2-type zinc-finger protein family.

The protein localises to the nucleus. May be involved in transcriptional regulation. The polypeptide is Zinc finger protein 285 (ZNF285) (Homo sapiens (Human)).